The following is a 479-amino-acid chain: Membrane-bound lytic murein transglycosylase F (479 aa).

An N-terminal signal peptide occupies residues 1-15 (MKRLLLVLCYITLLA). Positions 16 to 258 (GCQKVVVEQE…HLNEKYFAHV (243 aa)) are non-LT domain. Residues 260 to 479 (RFDYVDTRAF…QTDAIQPQQP (220 aa)) are LT domain. Residue Glu303 is part of the active site. The disordered stretch occupies residues 457-479 (LQTAEAKETEEKPQTDAIQPQQP). Basic and acidic residues predominate over residues 461 to 470 (EAKETEEKPQ).

In the N-terminal section; belongs to the bacterial solute-binding protein 3 family. The protein in the C-terminal section; belongs to the transglycosylase Slt family.

The protein localises to the cell outer membrane. The enzyme catalyses Exolytic cleavage of the (1-&gt;4)-beta-glycosidic linkage between N-acetylmuramic acid (MurNAc) and N-acetylglucosamine (GlcNAc) residues in peptidoglycan, from either the reducing or the non-reducing ends of the peptidoglycan chains, with concomitant formation of a 1,6-anhydrobond in the MurNAc residue.. In terms of biological role, murein-degrading enzyme that degrades murein glycan strands and insoluble, high-molecular weight murein sacculi, with the concomitant formation of a 1,6-anhydromuramoyl product. Lytic transglycosylases (LTs) play an integral role in the metabolism of the peptidoglycan (PG) sacculus. Their lytic action creates space within the PG sacculus to allow for its expansion as well as for the insertion of various structures such as secretion systems and flagella. The protein is Membrane-bound lytic murein transglycosylase F of Shewanella pealeana (strain ATCC 700345 / ANG-SQ1).